Here is a 32-residue protein sequence, read N- to C-terminus: Beta-amanitin proprotein (32 aa).

The propeptide occupies 1–10; the sequence is MSDINATRLP. Residues 11–18 constitute a cross-link (cyclopeptide (Ile-Pro)); that stretch reads IWGIGCDP. The segment at residues 12–16 is a cross-link (2'-cysteinyl-6'-hydroxytryptophan sulfoxide (Trp-Cys)); it reads WGIGC. A propeptide spanning residues 19-32 is cleaved from the precursor; that stretch reads CIGDDVTILLTRGE.

The protein belongs to the MSDIN fungal toxin family. Post-translationally, processed by the macrocyclase-peptidase enzyme POPB to yield a toxic cyclic decapeptide. POPB first removes 10 residues from the N-terminus. Conformational trapping of the remaining peptide forces the enzyme to release this intermediate rather than proceed to macrocyclization. The enzyme rebinds the remaining peptide in a different conformation and catalyzes macrocyclization of the N-terminal 8 residues.

Toxin belonging to the bicyclic octapeptides amatoxins that acts by binding non-competitively to RNA polymerase II and greatly slowing the elongation of transcripts from target promoters. The polypeptide is Beta-amanitin proprotein (Amanita phalloides (Death cap)).